A 171-amino-acid chain; its full sequence is AN1-type zinc finger protein 2A (171 aa).

2 AN1-type zinc fingers span residues 4 to 52 and 94 to 142; these read PDLG…KKDV and KVFT…SSVS. 16 residues coordinate Zn(2+): Cys-10, Cys-15, Cys-25, Cys-28, Cys-33, His-36, His-42, Cys-44, Cys-100, Cys-105, Cys-115, Cys-118, Cys-123, His-126, His-132, and Cys-134. A disordered region spans residues 135-171; the sequence is QAGSSSVSRGRSSASRAAEQKPSGVSWLAQRLRRTVK. The span at 136–151 shows a compositional bias: low complexity; that stretch reads AGSSSVSRGRSSASRA.

It is found in the cytoplasm. It localises to the nucleus. This is AN1-type zinc finger protein 2A (Zfand2a) from Rattus norvegicus (Rat).